Consider the following 161-residue polypeptide: uncharacterized protein (161 aa).

Residues 1 to 10 (MSKQQEQDTP) show a composition bias toward polar residues. Disordered regions lie at residues 1-20 (MSKQ…QRLQ), 55-84 (KKTR…MSDE), and 118-161 (LLQQ…ANNS). Residues 82–107 (SDEEYARQLQEEMDRLDASIQMDKEA) are a coiled coil. Over residues 144-161 (QQSSNTTTSSSCQSANNS) the composition is skewed to low complexity.

This is an uncharacterized protein from Caenorhabditis elegans.